The following is a 982-amino-acid chain: Protein cramped (982 aa).

Disordered stretches follow at residues 1-37 (MEELSKQPPPPPLTQPPPPSSSVSIEEPLPNGKGGGA), 71-111 (QKMK…GSGK), 323-349 (SLPSAASNNNNNNNETEPLQPSVASLD), 407-456 (NKRL…SSGD), and 822-851 (GTSSAGISTSGSKPDCSMNAMTASQDQEPG). The span at 7–20 (QPPPPPLTQPPPPS) shows a compositional bias: pro residues. The span at 21–30 (SSVSIEEPLP) shows a compositional bias: low complexity. Over residues 86 to 98 (SEREPNKKEEKAA) the composition is skewed to basic and acidic residues. The span at 100 to 111 (KTPSQLKTGSGK) shows a compositional bias: polar residues. Residues 109-173 (SGKTTWTNVE…HYYQTHHKIC (65 aa)) enclose the SANT domain. The span at 410–425 (LRTESGSEKRSPETKK) shows a compositional bias: basic and acidic residues. S431 and S437 each carry phosphoserine. Over residues 822 to 833 (GTSSAGISTSGS) the composition is skewed to low complexity.

The protein belongs to the cramped family. Ubiquitously expressed throughout embryonic development. High expression is detected in CNS and gonads.

The protein resides in the nucleus. Polycomb group (Pc-G) genes are needed to maintain expression patterns of the homeotic selector genes of the Antennapedia (Antp-C) and Bithorax (Bx-C) complexes, and hence for the maintenance of segmental determination. Can act as a modifier of position effect variegation (PEV). This chain is Protein cramped (crm), found in Drosophila melanogaster (Fruit fly).